The sequence spans 398 residues: uncharacterized protein (398 aa).

This is an uncharacterized protein from Bacillus subtilis (strain 168).